The following is a 299-amino-acid chain: MATH domain and coiled-coil domain-containing protein At2g42460 (299 aa).

Positions Gln7–Ile130 constitute an MATH domain. Positions Phe225–Gln262 form a coiled coil.

In Arabidopsis thaliana (Mouse-ear cress), this protein is MATH domain and coiled-coil domain-containing protein At2g42460.